The sequence spans 307 residues: F-box protein At2g23160 (307 aa).

One can recognise an F-box domain in the interval 2-49; that stretch reads NSSSPISIDLIAEILSRVPSKSVARFRCVSKPWASMIRRPYFTELFLT.

This Arabidopsis thaliana (Mouse-ear cress) protein is F-box protein At2g23160.